The following is a 208-amino-acid chain: Small ribosomal subunit protein eS1 (208 aa).

Belongs to the eukaryotic ribosomal protein eS1 family.

The sequence is that of Small ribosomal subunit protein eS1 from Saccharolobus islandicus (strain Y.N.15.51 / Yellowstone #2) (Sulfolobus islandicus).